The following is a 427-amino-acid chain: MKVLLIGSGGREHALAWKLAASPLLEKLYCALGNPGIAAVAELADIGVDDHAALIAFAKEKHIDLVVVGPEAPLVAGLADEMRAEGIRVFGPSRAAAQLEGSKGFTKDLCARFNIPTGAYGRFNNAPKAKAYIRQQGAPIVVKADGLAAGKGVVVAMTLQEALDAVDSCFEGAFGAAGAEVVVEEFLDGEEASFFCICDGKTALPLGSAQDHKRVGDGDTGPNTGGMGAYAPAPVMTPEMVARTMRELIEPTMRGMAEIGAPFSGILFAGLMITSDGPKLIEYNTRFGDPECQVLMMRLNSDLLALVNAAVDGRLDEVSLEWKDEPALTVVMAAEGYPANVKKGSVIRDLEKLESIDGVKLFHAGTALKDGAIVASGGRVLNITATAATVAQAQARAYEALKLIDWPEGFYRSDIGWRAVEREKANR.

The ATP-grasp domain maps to Lys107–Asp312. Ile133–Ser193 serves as a coordination point for ATP. Positions 282 and 284 each coordinate Mg(2+).

The protein belongs to the GARS family. It depends on Mg(2+) as a cofactor. The cofactor is Mn(2+).

It carries out the reaction 5-phospho-beta-D-ribosylamine + glycine + ATP = N(1)-(5-phospho-beta-D-ribosyl)glycinamide + ADP + phosphate + H(+). It participates in purine metabolism; IMP biosynthesis via de novo pathway; N(1)-(5-phospho-D-ribosyl)glycinamide from 5-phospho-alpha-D-ribose 1-diphosphate: step 2/2. The polypeptide is Phosphoribosylamine--glycine ligase (Brucella melitensis biotype 1 (strain ATCC 23456 / CCUG 17765 / NCTC 10094 / 16M)).